Reading from the N-terminus, the 257-residue chain is 3-deoxy-manno-octulosonate cytidylyltransferase (257 aa).

Belongs to the KdsB family.

It is found in the cytoplasm. It carries out the reaction 3-deoxy-alpha-D-manno-oct-2-ulosonate + CTP = CMP-3-deoxy-beta-D-manno-octulosonate + diphosphate. Its pathway is nucleotide-sugar biosynthesis; CMP-3-deoxy-D-manno-octulosonate biosynthesis; CMP-3-deoxy-D-manno-octulosonate from 3-deoxy-D-manno-octulosonate and CTP: step 1/1. It participates in bacterial outer membrane biogenesis; lipopolysaccharide biosynthesis. Functionally, activates KDO (a required 8-carbon sugar) for incorporation into bacterial lipopolysaccharide in Gram-negative bacteria. The sequence is that of 3-deoxy-manno-octulosonate cytidylyltransferase from Stenotrophomonas maltophilia (strain R551-3).